The primary structure comprises 227 residues: Putative ankyrin repeat protein RF_0314 (227 aa).

3 ANK repeats span residues 94-126 (NGCT…DPNI), 130-164 (DGNT…DIEL), and 168-199 (LGWT…DNDF).

The protein is Putative ankyrin repeat protein RF_0314 of Rickettsia felis (strain ATCC VR-1525 / URRWXCal2) (Rickettsia azadi).